The chain runs to 220 residues: Putative GED domain-containing protein DNM1P46 (220 aa).

Positions 18–46 (VSVETRNVKPQGKDSKAEENGSHSFMHSM) are disordered. Positions 28–38 (QGKDSKAEENG) are enriched in basic and acidic residues. The GED domain occupies 54–149 (METTQNLVDS…CCPTCTRLGT (96 aa)). The interval 173–194 (DTPGGVGRAGTAARRDSRGNEK) is disordered. The segment covering 185–194 (ARRDSRGNEK) has biased composition (basic and acidic residues).

In Homo sapiens (Human), this protein is Putative GED domain-containing protein DNM1P46 (DNM1P46).